The chain runs to 467 residues: Membrane-bound lytic murein transglycosylase F (467 aa).

An N-terminal signal peptide occupies residues 1 to 33 (MTELFRHSKHLLASLALLSVLGLMLAMHPSPSA). The tract at residues 34 to 266 (IERIMARGEL…KLEDRFYGHV (233 aa)) is non-LT domain. The LT domain stretch occupies residues 268–467 (QFNLYAARSF…RRDDTLIALN (200 aa)). The active site involves glutamate 313.

It in the N-terminal section; belongs to the bacterial solute-binding protein 3 family. The protein in the C-terminal section; belongs to the transglycosylase Slt family.

Its subcellular location is the cell outer membrane. The catalysed reaction is Exolytic cleavage of the (1-&gt;4)-beta-glycosidic linkage between N-acetylmuramic acid (MurNAc) and N-acetylglucosamine (GlcNAc) residues in peptidoglycan, from either the reducing or the non-reducing ends of the peptidoglycan chains, with concomitant formation of a 1,6-anhydrobond in the MurNAc residue.. Functionally, murein-degrading enzyme that degrades murein glycan strands and insoluble, high-molecular weight murein sacculi, with the concomitant formation of a 1,6-anhydromuramoyl product. Lytic transglycosylases (LTs) play an integral role in the metabolism of the peptidoglycan (PG) sacculus. Their lytic action creates space within the PG sacculus to allow for its expansion as well as for the insertion of various structures such as secretion systems and flagella. This is Membrane-bound lytic murein transglycosylase F from Alcanivorax borkumensis (strain ATCC 700651 / DSM 11573 / NCIMB 13689 / SK2).